A 450-amino-acid polypeptide reads, in one-letter code: tRNA modification GTPase MnmE (450 aa).

Positions 21, 78, and 117 each coordinate (6S)-5-formyl-5,6,7,8-tetrahydrofolate. Residues 213–376 (GHALSIVGKP…LSQKISAFFP (164 aa)) form the TrmE-type G domain. K(+) is bound at residue N223. Residues 223–228 (NAGKSS), 242–248 (SDIKGTT), and 267–270 (DTAG) contribute to the GTP site. Mg(2+) is bound at residue S227. 3 residues coordinate K(+): S242, I244, and T247. T248 contacts Mg(2+). (6S)-5-formyl-5,6,7,8-tetrahydrofolate is bound at residue K450.

It belongs to the TRAFAC class TrmE-Era-EngA-EngB-Septin-like GTPase superfamily. TrmE GTPase family. As to quaternary structure, homodimer. Heterotetramer of two MnmE and two MnmG subunits. The cofactor is K(+).

The protein resides in the cytoplasm. Functionally, exhibits a very high intrinsic GTPase hydrolysis rate. Involved in the addition of a carboxymethylaminomethyl (cmnm) group at the wobble position (U34) of certain tRNAs, forming tRNA-cmnm(5)s(2)U34. The sequence is that of tRNA modification GTPase MnmE from Helicobacter pylori (strain Shi470).